The primary structure comprises 287 residues: Tetraspanning orphan receptor (287 aa).

The Extracellular segment spans residues 1–27 (MSPSLVSDTQKHERGSHGVKIKHFSPY). The helical transmembrane segment at 28–48 (IAVCVTTFSLAFCCFMVHGAI) threads the bilayer. The Cytoplasmic portion of the chain corresponds to 49–55 (TRQPTHL). Residues 56–76 (LPFFFIQVFDLIICLIHILGF) traverse the membrane as a helical segment. Residues 77-91 (MSSTSDIRLVIHTKT) lie on the Extracellular side of the membrane. Residues 92–114 (GPIYIKSTGLTFIILSISRMMLA) form a helical membrane-spanning segment. Residues 115–287 (FKAYCLGMVW…NASSNAHSSC (173 aa)) lie on the Cytoplasmic side of the membrane. The tract at residues 165-190 (NNSIGNSGSPNEPNTRPRPDTITYDP) is disordered.

Interacts (via N-terminal extracellular domain) with human C2a.

The protein resides in the cell membrane. Functionally, cell surface receptor that binds to human complement C2a protein. This results in inhibition of the classical and lectin pathways of complement activation, probably due to interference with binding of C2a to C4b and interference with cleavage by C1 or MASP2 such that C3 convertase cannot be formed. This infers resistance to complement-mediated cell lysis, allowing parasite survival and infection. This chain is Tetraspanning orphan receptor, found in Trypanosoma cruzi.